Consider the following 45-residue polypeptide: Photosystem II reaction center protein K (45 aa).

The propeptide occupies 1 to 8 (MELAMLLA). Residues 24-44 (LPVIPVFFLLLAFVWQAAVGF) traverse the membrane as a helical segment.

It belongs to the PsbK family. PSII is composed of 1 copy each of membrane proteins PsbA, PsbB, PsbC, PsbD, PsbE, PsbF, PsbH, PsbI, PsbJ, PsbK, PsbL, PsbM, PsbT, PsbX, PsbY, PsbZ, Psb30/Ycf12, peripheral proteins PsbO, CyanoQ (PsbQ), PsbU, PsbV and a large number of cofactors. It forms dimeric complexes.

Its subcellular location is the cellular thylakoid membrane. In terms of biological role, one of the components of the core complex of photosystem II (PSII). PSII is a light-driven water:plastoquinone oxidoreductase that uses light energy to abstract electrons from H(2)O, generating O(2) and a proton gradient subsequently used for ATP formation. It consists of a core antenna complex that captures photons, and an electron transfer chain that converts photonic excitation into a charge separation. The chain is Photosystem II reaction center protein K from Trichodesmium erythraeum (strain IMS101).